Reading from the N-terminus, the 127-residue chain is DNA-directed RNA polymerase subunit omega (127 aa).

This sequence belongs to the RNA polymerase subunit omega family. In terms of assembly, the RNAP catalytic core consists of 2 alpha, 1 beta, 1 beta' and 1 omega subunit. When a sigma factor is associated with the core the holoenzyme is formed, which can initiate transcription.

The enzyme catalyses RNA(n) + a ribonucleoside 5'-triphosphate = RNA(n+1) + diphosphate. Promotes RNA polymerase assembly. Latches the N- and C-terminal regions of the beta' subunit thereby facilitating its interaction with the beta and alpha subunits. This Rickettsia africae (strain ESF-5) protein is DNA-directed RNA polymerase subunit omega.